A 1072-amino-acid chain; its full sequence is DNA-directed RNA polymerase subunit beta (1072 aa).

The protein belongs to the RNA polymerase beta chain family. In plastids the minimal PEP RNA polymerase catalytic core is composed of four subunits: alpha, beta, beta', and beta''. When a (nuclear-encoded) sigma factor is associated with the core the holoenzyme is formed, which can initiate transcription.

It localises to the plastid. Its subcellular location is the chloroplast. It catalyses the reaction RNA(n) + a ribonucleoside 5'-triphosphate = RNA(n+1) + diphosphate. DNA-dependent RNA polymerase catalyzes the transcription of DNA into RNA using the four ribonucleoside triphosphates as substrates. The chain is DNA-directed RNA polymerase subunit beta from Crucihimalaya wallichii (Rock-cress).